Here is a 20-residue protein sequence, read N- to C-terminus: Mu-conotoxin SIIIB (20 aa).

Residue glutamine 1 is modified to Pyrrolidone carboxylic acid. Cystine bridges form between cysteine 3–cysteine 13, cysteine 4–cysteine 19, and cysteine 8–cysteine 20. Cysteine 20 carries the cysteine amide modification.

As to expression, expressed by the venom duct.

The protein resides in the secreted. Its function is as follows. Mu-conotoxins block voltage-gated sodium channels (VGSC). Potently displaces (125)I-TIIIA from native rat brain Nav1.2/SCN2A (IC(50) is 5 nM) and muscle Nav1.4/SCN4A (IC(50) is 3 nM) VGSCs. Potently and irreversibly inhibits current through Xenopus oocyte-expressed Nav1.2/SCN2A and Nav1.4/SCN4A. This chain is Mu-conotoxin SIIIB, found in Conus striatus (Striated cone).